Here is a 156-residue protein sequence, read N- to C-terminus: Arginine repressor (156 aa).

Belongs to the ArgR family.

It is found in the cytoplasm. Its pathway is amino-acid biosynthesis; L-arginine biosynthesis [regulation]. Its function is as follows. Regulates arginine biosynthesis genes. The polypeptide is Arginine repressor (Edwardsiella ictaluri (strain 93-146)).